Here is a 378-residue protein sequence, read N- to C-terminus: Protein RecA (378 aa).

An ATP-binding site is contributed by 79–86 (GPESSGKT).

This sequence belongs to the RecA family.

It is found in the cytoplasm. Its function is as follows. Can catalyze the hydrolysis of ATP in the presence of single-stranded DNA, the ATP-dependent uptake of single-stranded DNA by duplex DNA, and the ATP-dependent hybridization of homologous single-stranded DNAs. It interacts with LexA causing its activation and leading to its autocatalytic cleavage. This Streptococcus pyogenes serotype M12 (strain MGAS2096) protein is Protein RecA.